Reading from the N-terminus, the 185-residue chain is Threonylcarbamoyl-AMP synthase (185 aa).

Residues 3–185 enclose the YrdC-like domain; that stretch reads EQAPAEVKQV…IDAISGKILR (183 aa).

It belongs to the SUA5 family. TsaC subfamily.

It is found in the cytoplasm. It carries out the reaction L-threonine + hydrogencarbonate + ATP = L-threonylcarbamoyladenylate + diphosphate + H2O. Its function is as follows. Required for the formation of a threonylcarbamoyl group on adenosine at position 37 (t(6)A37) in tRNAs that read codons beginning with adenine. Catalyzes the conversion of L-threonine, HCO(3)(-)/CO(2) and ATP to give threonylcarbamoyl-AMP (TC-AMP) as the acyladenylate intermediate, with the release of diphosphate. This is Threonylcarbamoyl-AMP synthase from Shewanella woodyi (strain ATCC 51908 / MS32).